A 289-amino-acid chain; its full sequence is Acetyl-coenzyme A carboxylase carboxyl transferase subunit beta (289 aa).

Positions 28–289 constitute a CoA carboxyltransferase N-terminal domain; sequence VMTKCPKCKK…QGGEMAVWQS (262 aa). Positions 32, 35, 51, and 54 each coordinate Zn(2+). Residues 32–54 form a C4-type zinc finger; sequence CPKCKKIMYTKELLKNLKVCVNC.

Belongs to the AccD/PCCB family. In terms of assembly, acetyl-CoA carboxylase is a heterohexamer composed of biotin carboxyl carrier protein (AccB), biotin carboxylase (AccC) and two subunits each of ACCase subunit alpha (AccA) and ACCase subunit beta (AccD). Requires Zn(2+) as cofactor.

The protein resides in the cytoplasm. The enzyme catalyses N(6)-carboxybiotinyl-L-lysyl-[protein] + acetyl-CoA = N(6)-biotinyl-L-lysyl-[protein] + malonyl-CoA. The protein operates within lipid metabolism; malonyl-CoA biosynthesis; malonyl-CoA from acetyl-CoA: step 1/1. Component of the acetyl coenzyme A carboxylase (ACC) complex. Biotin carboxylase (BC) catalyzes the carboxylation of biotin on its carrier protein (BCCP) and then the CO(2) group is transferred by the transcarboxylase to acetyl-CoA to form malonyl-CoA. The chain is Acetyl-coenzyme A carboxylase carboxyl transferase subunit beta from Bacillus cereus (strain AH187).